A 502-amino-acid chain; its full sequence is Putative diacyglycerol O-acyltransferase MT1809 (502 aa).

Residue His174 is the Proton acceptor of the active site.

It belongs to the long-chain O-acyltransferase family.

It catalyses the reaction an acyl-CoA + a 1,2-diacyl-sn-glycerol = a triacyl-sn-glycerol + CoA. It functions in the pathway glycerolipid metabolism; triacylglycerol biosynthesis. The chain is Putative diacyglycerol O-acyltransferase MT1809 from Mycobacterium tuberculosis (strain CDC 1551 / Oshkosh).